The chain runs to 727 residues: Glucans biosynthesis glucosyltransferase H (727 aa).

Residues 18-38 are disordered; it reads SAMPNERPGAMEPQNLSKMPE. 7 helical membrane passes run 58–78, 97–117, 278–298, 408–428, 460–480, 496–516, and 572–592; these read FLVV…MGAV, VNFC…LILL, LQQF…GWWV, IMAY…LMLA, LFYI…LLLL, IFSV…MMFI, and LLAW…ISAW.

Belongs to the glycosyltransferase 2 family. OpgH subfamily.

Its subcellular location is the cell inner membrane. Its pathway is glycan metabolism; osmoregulated periplasmic glucan (OPG) biosynthesis. Functionally, involved in the biosynthesis of osmoregulated periplasmic glucans (OPGs). The chain is Glucans biosynthesis glucosyltransferase H from Shewanella baltica (strain OS223).